We begin with the raw amino-acid sequence, 245 residues long: Extracellular protein ARB_04177 (245 aa).

Its subcellular location is the secreted. The chain is Extracellular protein ARB_04177 from Arthroderma benhamiae (strain ATCC MYA-4681 / CBS 112371) (Trichophyton mentagrophytes).